The primary structure comprises 854 residues: Armadillo repeat-containing protein 2 (854 aa).

3 disordered regions span residues 1–116 (MLSS…SFPK), 140–194 (QGML…PLLT), and 206–255 (EVSL…ETDT). Positions 58-73 (PASSRSPENRPPSSFS) are enriched in low complexity. Composition is skewed to polar residues over residues 74–87 (LHASSFELSDSKPI) and 162–187 (KPVSVGSSTARRNGTHLTASSATGQL). ARM repeat units lie at residues 255–294 (TEVDEVFWKARIVPILHELENEEDIEEMCAACTQLHRTLE), 298–337 (MLGKKFKRRTVLLKALYKLVDADSDPLSLKLAKLILALKV), 356–396 (EKND…ALKF), 401–442 (PGFL…HLLV), 455–496 (PLTR…KLTS), 499–540 (DCCA…NLTA), 544–583 (QARELFSRETGSVETLLTLFQSFYHHKENSPKLQLSEAKP), 585–605 (AEAEDVLVKLTRVLANIAIHP), 606–649 (RIGP…NLSF), 651–692 (QVKS…NLSQ), 694–733 (HDVCNFLMQKNVHKFMITLLEAKHQDICFSACGVLLNLTV), and 735–777 (KEKR…NFSE).

Functionally, required for sperm flagellum axoneme organization and function. Involved in axonemal central pair complex assembly and/or stability. The polypeptide is Armadillo repeat-containing protein 2 (Mus musculus (Mouse)).